We begin with the raw amino-acid sequence, 401 residues long: NADH-quinone oxidoreductase subunit D (401 aa).

It belongs to the complex I 49 kDa subunit family. In terms of assembly, NDH-1 is composed of 15 different subunits. Subunits NuoB, C, D, E, F, and G constitute the peripheral sector of the complex.

Its subcellular location is the cell membrane. The enzyme catalyses a quinone + NADH + 5 H(+)(in) = a quinol + NAD(+) + 4 H(+)(out). In terms of biological role, NDH-1 shuttles electrons from NADH, via FMN and iron-sulfur (Fe-S) centers, to quinones in the respiratory chain. The immediate electron acceptor for the enzyme in this species is believed to be a menaquinone. Couples the redox reaction to proton translocation (for every two electrons transferred, four hydrogen ions are translocated across the cytoplasmic membrane), and thus conserves the redox energy in a proton gradient. This Deinococcus radiodurans (strain ATCC 13939 / DSM 20539 / JCM 16871 / CCUG 27074 / LMG 4051 / NBRC 15346 / NCIMB 9279 / VKM B-1422 / R1) protein is NADH-quinone oxidoreductase subunit D.